The following is a 652-amino-acid chain: Acetyl-coenzyme A synthetase (652 aa).

Residues 190–193 and threonine 310 each bind CoA; that span reads RGGR. ATP contacts are provided by residues 386–388, 410–415, aspartate 499, and arginine 514; these read GEP and DTWWQT. Serine 522 is a binding site for CoA. Arginine 525 is a binding site for ATP. The Mg(2+) site is built by valine 536, histidine 538, and valine 541. Arginine 583 contributes to the CoA binding site. Residue lysine 608 is modified to N6-acetyllysine.

The protein belongs to the ATP-dependent AMP-binding enzyme family. It depends on Mg(2+) as a cofactor. In terms of processing, acetylated. Deacetylation by the SIR2-homolog deacetylase activates the enzyme.

The enzyme catalyses acetate + ATP + CoA = acetyl-CoA + AMP + diphosphate. Catalyzes the conversion of acetate into acetyl-CoA (AcCoA), an essential intermediate at the junction of anabolic and catabolic pathways. AcsA undergoes a two-step reaction. In the first half reaction, AcsA combines acetate with ATP to form acetyl-adenylate (AcAMP) intermediate. In the second half reaction, it can then transfer the acetyl group from AcAMP to the sulfhydryl group of CoA, forming the product AcCoA. In Methylorubrum extorquens (strain CM4 / NCIMB 13688) (Methylobacterium extorquens), this protein is Acetyl-coenzyme A synthetase.